The sequence spans 575 residues: Protein AUXIN SIGNALING F-BOX 2 (575 aa).

In terms of domain architecture, F-box spans 1 to 47; that stretch reads MNYFPDEVIEHVFDFVTSHKDRNAISLVCKSWYKIERYSRQKVFIGN. Position 69 (lysine 69) interacts with 1D-myo-inositol hexakisphosphate. Positions 76–77 are interaction with auxin-responsive proteins; the sequence is DF. 1D-myo-inositol hexakisphosphate is bound by residues 108 to 109 and arginine 340; that span reads KR. An interaction with auxin-responsive proteins region spans residues 343–348; it reads PSDLLG. Residue 396-398 coordinates 1D-myo-inositol hexakisphosphate; it reads RFR. The segment at 400-404 is interaction with auxin-responsive proteins; it reads CILEP. Arginine 431 contacts 1D-myo-inositol hexakisphosphate. Residues 459–460 are interaction with auxin-responsive proteins; that stretch reads AF. 1D-myo-inositol hexakisphosphate is bound by residues 479–480 and arginine 504; that span reads KK.

In terms of assembly, part of a SCF (SKP1-cullin-F-box) protein ligase complex. Interacts with Aux/IAA proteins (IAA7) in an auxin-dependent manner. Ubiquitous, with higher levels in seedlings.

The protein resides in the nucleus. Its pathway is protein modification; protein ubiquitination. Its function is as follows. Component of SCF(ASK-cullin-F-box) E3 ubiquitin ligase complexes, which may mediate the ubiquitination and subsequent proteasomal degradation of target proteins. Confers sensitivity to the virulent bacterial pathogen P.syringae. Auxin receptor that mediates Aux/IAA proteins proteasomal degradation and auxin-regulated transcription. Involved in embryogenesis regulation by auxin. The polypeptide is Protein AUXIN SIGNALING F-BOX 2 (AFB2) (Arabidopsis thaliana (Mouse-ear cress)).